Reading from the N-terminus, the 239-residue chain is Acyl-protein thioesterase 1 (239 aa).

Catalysis depends on charge relay system residues Ser124, Asp180, and His213.

Belongs to the AB hydrolase superfamily. AB hydrolase 2 family.

It localises to the cytoplasm. Its subcellular location is the nucleus. It carries out the reaction S-hexadecanoyl-L-cysteinyl-[protein] + H2O = L-cysteinyl-[protein] + hexadecanoate + H(+). In terms of biological role, hydrolyzes fatty acids from S-acylated cysteine residues in proteins with a strong preference for palmitoylated G-alpha proteins over other acyl substrates. Mediates the deacylation of G-alpha proteins such as GPA1 in vivo, but has weak or no activity toward palmitoylated Ras proteins. Has weak lysophospholipase activity in vitro; however such activity may not exist in vivo. This chain is Acyl-protein thioesterase 1, found in Emericella nidulans (strain FGSC A4 / ATCC 38163 / CBS 112.46 / NRRL 194 / M139) (Aspergillus nidulans).